The following is a 483-amino-acid chain: Glutamyl-tRNA(Gln) amidotransferase subunit A (483 aa).

Active-site charge relay system residues include lysine 76 and serine 151. The Acyl-ester intermediate role is filled by serine 175.

The protein belongs to the amidase family. GatA subfamily. In terms of assembly, heterotrimer of A, B and C subunits.

It carries out the reaction L-glutamyl-tRNA(Gln) + L-glutamine + ATP + H2O = L-glutaminyl-tRNA(Gln) + L-glutamate + ADP + phosphate + H(+). Its function is as follows. Allows the formation of correctly charged Gln-tRNA(Gln) through the transamidation of misacylated Glu-tRNA(Gln) in organisms which lack glutaminyl-tRNA synthetase. The reaction takes place in the presence of glutamine and ATP through an activated gamma-phospho-Glu-tRNA(Gln). The polypeptide is Glutamyl-tRNA(Gln) amidotransferase subunit A (Pseudomonas putida (strain ATCC 700007 / DSM 6899 / JCM 31910 / BCRC 17059 / LMG 24140 / F1)).